The following is a 497-amino-acid chain: Pseudooxynicotine dehydrogenase (497 aa).

The segment at residues 1-43 (MANDKGDISKDGVSRRKFLGGAVIGAAAAAGVGSQILSLSATA) is a signal peptide (tat-type signal). FAD contacts are provided by alanine 70, glutamate 89, arginine 97, tryptophan 114, valine 286, serine 462, and isoleucine 472.

It belongs to the flavin monoamine oxidase family. In terms of assembly, homodimer. FAD serves as cofactor. Post-translationally, predicted to be exported by the Tat system. The position of the signal peptide cleavage has not been experimentally proven.

Its subcellular location is the periplasm. The catalysed reaction is pseudooxynicotine + 2 Fe(III)-[cytochrome c] + H2O = 4-oxo-4-(pyridin-3-yl)butanal + methylamine + 2 Fe(II)-[cytochrome c] + 2 H(+). Its pathway is alkaloid degradation; nicotine degradation. Strongly inhibited by Ag(+), Co(2+), Cu(2+) and Hg(2+). Functionally, involved in nicotine degradation. Catalyzes the deamination of pseudooxynicotine to 3-succinoylsemialdehyde-pyridine. This Pseudomonas sp protein is Pseudooxynicotine dehydrogenase.